Here is a 226-residue protein sequence, read N- to C-terminus: V-type proton ATPase subunit E (226 aa).

The protein belongs to the V-ATPase E subunit family. As to quaternary structure, V-ATPase is a heteromultimeric enzyme made up of two complexes: the ATP-hydrolytic V1 complex and the proton translocation V0 complex. The V1 complex consists of three catalytic AB heterodimers that form a heterohexamer, three peripheral stalks each consisting of EG heterodimers, one central rotor including subunits D and F, and the regulatory subunits C and H. The proton translocation complex V0 consists of the proton transport subunit a, a ring of proteolipid subunits c9c'', rotary subunit d, subunits e and f, and the accessory subunits vah-19/Ac45 and vah-20/PRR. As to expression, expressed in the excretory cell and syncytial hypodermal cells (at protein level). Expressed in the intestine (at protein level).

It localises to the cytoplasm. The protein localises to the apical cell membrane. In terms of biological role, subunit of the V1 complex of vacuolar(H+)-ATPase (V-ATPase), a multisubunit enzyme composed of a peripheral complex (V1) that hydrolyzes ATP and a membrane integral complex (V0) that translocates protons. V-ATPase is responsible for acidifying and maintaining the pH of intracellular compartments and in some cell types, is targeted to the plasma membrane, where it is responsible for acidifying the extracellular environment. Regulates pH homeostasis in the intestine. Probably by regulating cytoplasmic pH, required for cell survival in the intestine and hypodermis. Involved in receptor-mediated endocytosis. Involved in embryogenesis and larval development. The chain is V-type proton ATPase subunit E from Caenorhabditis elegans.